We begin with the raw amino-acid sequence, 532 residues long: Bifunctional purine biosynthesis protein PurH (532 aa).

In terms of domain architecture, MGS-like spans 1–149 (MTDPAPLTRA…KNHGAVTVLT (149 aa)).

Belongs to the PurH family.

It catalyses the reaction (6R)-10-formyltetrahydrofolate + 5-amino-1-(5-phospho-beta-D-ribosyl)imidazole-4-carboxamide = 5-formamido-1-(5-phospho-D-ribosyl)imidazole-4-carboxamide + (6S)-5,6,7,8-tetrahydrofolate. The enzyme catalyses IMP + H2O = 5-formamido-1-(5-phospho-D-ribosyl)imidazole-4-carboxamide. Its pathway is purine metabolism; IMP biosynthesis via de novo pathway; 5-formamido-1-(5-phospho-D-ribosyl)imidazole-4-carboxamide from 5-amino-1-(5-phospho-D-ribosyl)imidazole-4-carboxamide (10-formyl THF route): step 1/1. It participates in purine metabolism; IMP biosynthesis via de novo pathway; IMP from 5-formamido-1-(5-phospho-D-ribosyl)imidazole-4-carboxamide: step 1/1. This is Bifunctional purine biosynthesis protein PurH from Jannaschia sp. (strain CCS1).